The following is a 503-amino-acid chain: ATP synthase subunit alpha (503 aa).

170–177 contacts ATP; that stretch reads GDKQTGKT.

The protein belongs to the ATPase alpha/beta chains family. In terms of assembly, F-type ATPases have 2 components, CF(1) - the catalytic core - and CF(0) - the membrane proton channel. CF(1) has five subunits: alpha(3), beta(3), gamma(1), delta(1), epsilon(1). CF(0) has three main subunits: a(1), b(2) and c(9-12). The alpha and beta chains form an alternating ring which encloses part of the gamma chain. CF(1) is attached to CF(0) by a central stalk formed by the gamma and epsilon chains, while a peripheral stalk is formed by the delta and b chains.

It is found in the cell inner membrane. The catalysed reaction is ATP + H2O + 4 H(+)(in) = ADP + phosphate + 5 H(+)(out). Functionally, produces ATP from ADP in the presence of a proton gradient across the membrane. The alpha chain is a regulatory subunit. The sequence is that of ATP synthase subunit alpha from Helicobacter pylori (strain P12).